Reading from the N-terminus, the 615-residue chain is Dihydroxy-acid dehydratase (615 aa).

Aspartate 85 is a Mg(2+) binding site. A [2Fe-2S] cluster-binding site is contributed by cysteine 126. Mg(2+) is bound by residues aspartate 127 and lysine 128. Lysine 128 carries the N6-carboxylysine modification. Cysteine 199 serves as a coordination point for [2Fe-2S] cluster. Glutamate 495 contacts Mg(2+). The Proton acceptor role is filled by serine 521.

The protein belongs to the IlvD/Edd family. In terms of assembly, homodimer. The cofactor is [2Fe-2S] cluster. Requires Mg(2+) as cofactor.

It catalyses the reaction (2R)-2,3-dihydroxy-3-methylbutanoate = 3-methyl-2-oxobutanoate + H2O. The catalysed reaction is (2R,3R)-2,3-dihydroxy-3-methylpentanoate = (S)-3-methyl-2-oxopentanoate + H2O. The protein operates within amino-acid biosynthesis; L-isoleucine biosynthesis; L-isoleucine from 2-oxobutanoate: step 3/4. Its pathway is amino-acid biosynthesis; L-valine biosynthesis; L-valine from pyruvate: step 3/4. Functions in the biosynthesis of branched-chain amino acids. Catalyzes the dehydration of (2R,3R)-2,3-dihydroxy-3-methylpentanoate (2,3-dihydroxy-3-methylvalerate) into 2-oxo-3-methylpentanoate (2-oxo-3-methylvalerate) and of (2R)-2,3-dihydroxy-3-methylbutanoate (2,3-dihydroxyisovalerate) into 2-oxo-3-methylbutanoate (2-oxoisovalerate), the penultimate precursor to L-isoleucine and L-valine, respectively. The sequence is that of Dihydroxy-acid dehydratase from Mannheimia succiniciproducens (strain KCTC 0769BP / MBEL55E).